The chain runs to 31 residues: Nemertide alpha-6 (31 aa).

Cystine bridges form between C2–C16, C9–C20, and C15–C26. 4-hydroxyproline occurs at positions 28 and 29.

The protein belongs to the nemertide family. Confined to the epidermis and to the mucus layer.

The protein resides in the secreted. Highly potent toxin against both insect and some mammalian sodium channels (Nav). It potently inhibits inactivation of insect sodium channels of B.germanica (BgNav1) (EC(50)=2.6 nM) and also delays the inactivation of mammalian Nav with potent activity on Nav1.1/SCN1A (hNav1.1/SCN1A; EC(50)=7.9 nM, rNav1.2/SCN2A; EC(50)=24.3 nM, rNav1.3/SCN3A; EC(50)=105.6 nM, rNav1.4/SCN4A; EC(50)=46.4 nM, hNav1.5/SCN5A; EC(50)=215.2 nM, mNav1.6/SCN8A; EC(50)=36.3 nM, hNav1.9/SCN9A; EC(50)=97.2 nM). 1 uM is enough to completely inhibits the inactivation, resulting in sustained non-inactivating currents. In addition, the toxin significantly enhances the recovery from inactivation, and the open state is not required for the toxin to interact with the channel. In vivo, injection into brine shrimp (Artemia salina) stops movement or causes death after 24 hours (EC(50)=2.8 uM). The sequence is that of Nemertide alpha-6 from Lineus sanguineus (Ribbon worm).